A 152-amino-acid polypeptide reads, in one-letter code: UPF0178 protein YaiI (152 aa).

The protein belongs to the UPF0178 family.

The sequence is that of UPF0178 protein YaiI from Shigella boydii serotype 18 (strain CDC 3083-94 / BS512).